The following is a 511-amino-acid chain: Putative polyol transporter 1 (511 aa).

The next 12 membrane-spanning stretches (helical) occupy residues 27-47 (FACAILASMTSIILGYDIGVM), 63-83 (VQLEILMGILNIYSLVGSGAA), 94-114 (YTIVLAGAFFFCGALLMGFAT), 124-144 (FVAGIGVGYAMMIAPVYTAEV), 151-171 (GFLTSFPEIFINIGILLGYVS), 186-206 (FMLGVGAVPSVFLAIGVLAMP), 284-304 (ILIACLGIHFAQQASGIDAVV), 324-344 (LATVAVGVVKTLFIVVGTCVV), 351-371 (ALLLTSMGGMFLSLTALGTSL), 384-404 (WAIGLAVTTVMTFVATFSIGA), 424-444 (GASLGVMLNRLMSGIIGMTFL), and 454-474 (GAFLLFAGVAAAAWVFFFTFL).

It belongs to the major facilitator superfamily. Sugar transporter (TC 2.A.1.1) family.

It localises to the membrane. In terms of biological role, plasma membrane sugar-proton symporter. The sequence is that of Putative polyol transporter 1 (PLT1) from Arabidopsis thaliana (Mouse-ear cress).